The sequence spans 365 residues: Eukaryotic translation initiation factor 3 subunit H (365 aa).

In terms of domain architecture, MPN spans 11–160; the sequence is VKVEALVVMK…LRAFRLSPKF (150 aa).

This sequence belongs to the eIF-3 subunit H family. Component of the eukaryotic translation initiation factor 3 (eIF-3) complex.

It localises to the cytoplasm. Functionally, component of the eukaryotic translation initiation factor 3 (eIF-3) complex, which is involved in protein synthesis of a specialized repertoire of mRNAs and, together with other initiation factors, stimulates binding of mRNA and methionyl-tRNAi to the 40S ribosome. The eIF-3 complex specifically targets and initiates translation of a subset of mRNAs involved in cell proliferation. The polypeptide is Eukaryotic translation initiation factor 3 subunit H (Aspergillus fumigatus (strain CBS 144.89 / FGSC A1163 / CEA10) (Neosartorya fumigata)).